The primary structure comprises 436 residues: Glutamyl-tRNA reductase (436 aa).

Substrate is bound by residues 50-53, S110, 115-117, and Q121; these read TCNR and ETQ. The active-site Nucleophile is C51. NADP(+) is bound at residue 190-195; that stretch reads GLGEMS.

This sequence belongs to the glutamyl-tRNA reductase family. Homodimer.

The enzyme catalyses (S)-4-amino-5-oxopentanoate + tRNA(Glu) + NADP(+) = L-glutamyl-tRNA(Glu) + NADPH + H(+). It participates in porphyrin-containing compound metabolism; protoporphyrin-IX biosynthesis; 5-aminolevulinate from L-glutamyl-tRNA(Glu): step 1/2. Catalyzes the NADPH-dependent reduction of glutamyl-tRNA(Glu) to glutamate 1-semialdehyde (GSA). The sequence is that of Glutamyl-tRNA reductase from Wolinella succinogenes (strain ATCC 29543 / DSM 1740 / CCUG 13145 / JCM 31913 / LMG 7466 / NCTC 11488 / FDC 602W) (Vibrio succinogenes).